The following is a 121-amino-acid chain: Protein SNORC (121 aa).

An N-terminal signal peptide occupies residues 1 to 24; sequence MASCLALRVALLLISGVLAPAVLT. The Extracellular portion of the chain corresponds to 25–92; the sequence is AEGPQEPDPT…QDGGSLGPGA (68 aa). Residues 26-84 are disordered; sequence EGPQEPDPTLWNEPIELPSGEGPLESTSHNQEFAVSGPPFPTSAPAPEDSTPPARVDQD. A helical transmembrane segment spans residues 93–113; that stretch reads IAAIVIAALLATCVVLALVVV. Topologically, residues 114–121 are cytoplasmic; the sequence is ALRKFSAS.

Interacts (via the extracellular domain) with FGF2. Expressed only in cartilage, including nasal, knee epiphyseal and rib tissues. In proliferation and hypertrophic chondrocytes, detected intracellulary and in the pericellular extracellular matrix. In primary spongiosa, detected only in the extracellular matrix.

The protein resides in the membrane. Its subcellular location is the cytoplasm. It is found in the secreted. The protein localises to the extracellular space. It localises to the extracellular matrix. Plays a role in the regulation of chondrocyte maturation and postnatal endochondral ossification. May inhibit cell growth stimulation induced by FGF2. In Mus musculus (Mouse), this protein is Protein SNORC.